The primary structure comprises 534 residues: Cytochrome P450 monooxygenase CYP4 (534 aa).

A helical membrane pass occupies residues 46–66; the sequence is TIIFCVLMSLVGYIVSRIIWG. Asn220 carries an N-linked (GlcNAc...) asparagine glycan. Cys477 contacts heme. Residue Asn515 is glycosylated (N-linked (GlcNAc...) asparagine).

The protein belongs to the cytochrome P450 family. Heme is required as a cofactor.

The protein localises to the membrane. It participates in secondary metabolite biosynthesis. Functionally, cytochrome P450 monooxygenase; part of the gene cluster that mediates the biosynthesis of a tyrosine-derived cytochalasan acting as a fungal signal recognized by resistant rice plants and leads to avirulence in Pi33 resistant rice cultivars. The first step in the pathway is catalyzed by the hybrid PKS-NRPS ACE1, assisted by the enoyl reductase RAP1, that are responsible for fusion of the tyrosine precursor and the polyketide backbone. The polyketide synthase module (PKS) of ACE1 is responsible for the synthesis of the polyketide backbone and the downstream nonribosomal peptide synthetase (NRPS) amidates the carboxyl end of the polyketide with the tyrosine precursor. Because ACE1 lacks a designated enoylreductase (ER) domain, the required activity is provided the enoyl reductase RAP1. Reduction by the hydrolyase ORFZ, followed by dehydration and intra-molecular Diels-Alder cyclization by the Diels-Alderase ORF3 then yield the required isoindolone-fused macrocycle. A number of oxidative steps catalyzed by the tailoring enzymes identified within the cluster, including cytochrome P450 monooxygenases CYP1 to CYP4, the FAD-linked oxidoreductase OXR2 and the short-chain dehydrogenase/reductase OXR1, are further required to afford the final cytochalasans that confer avirulence and which have still to be identified. The monooxygenase CYP1 has been shown to be a site-selective C-18 hydroxylase whereas the function of CYP3 is the site-selective epoxidation of the C-6/C-7 olefin that is present in some intermediate compounds. Finally, SYN2 and RAP2 are not required for avirulence in Pi33 resistant rice cultivars. The sequence is that of Cytochrome P450 monooxygenase CYP4 from Pyricularia oryzae (strain 70-15 / ATCC MYA-4617 / FGSC 8958) (Rice blast fungus).